The chain runs to 107 residues: MMKVLVVIALLVTLISYSSSEGIDDLEADELLSLMANEQTRKECIPKHHECTSNKHGCCRGNFFKYKCQCTTVVTQDGEQTERCFCGTPPHHKAAELVVGFGKKIFG.

The N-terminal stretch at 1–20 is a signal peptide; the sequence is MMKVLVVIALLVTLISYSSS. The propeptide occupies 21–41; sequence EGIDDLEADELLSLMANEQTR. Intrachain disulfides connect cysteine 44–cysteine 59, cysteine 51–cysteine 68, cysteine 58–cysteine 86, and cysteine 70–cysteine 84.

Belongs to the neurotoxin 19 (CSTX) family. 04 (U1-Lctx) subfamily. In terms of tissue distribution, expressed by the venom gland.

The protein localises to the secreted. The sequence is that of U1-lycotoxin-Ls1b from Lycosa singoriensis (Wolf spider).